A 3898-amino-acid polypeptide reads, in one-letter code: Genome polyprotein (3898 aa).

The Peptidase C53 domain maps to 1 to 168 (MELNHFELLY…TNCPLWVTSC (168 aa)). Catalysis depends on for N-terminal protease activity residues Glu22, His49, and Cys69. Residues 32-54 (LFGNPSEVHPQSTLKLPHDRGRG) are disordered. Residues 112 to 138 (CEVTKRIGRVTGSDGKLYHIYVCVDGC) form a zinc-binding TRASH domain region. Residue Asn157 is glycosylated (N-linked (GlcNAc...) asparagine; by host). 2 disordered regions span residues 170–206 (DDGA…KPPD) and 221–242 (KGKV…KPPE). Basic and acidic residues-rich tracts occupy residues 176–185 (SKDKKPDRMN) and 192–204 (APRE…KTKP). Residues Asn269, Asn274, Asn278, Asn293, and Asn332 are each glycosylated (N-linked (GlcNAc...) asparagine; by host). Disulfide bonds link Cys305–Cys349 and Cys335–Cys336. N-linked (GlcNAc...) asparagine; by host glycans are attached at residues Asn362 and Asn367. Cystine bridges form between Cys377–Cys422 and Cys381–Cys405. Asn410, Asn425, Asn500, and Asn594 each carry an N-linked (GlcNAc...) asparagine; by host glycan. An intrachain disulfide couples Cys693 to Cys737. Asn805, Asn810, Asn874, Asn918, Asn949, and Asn986 each carry an N-linked (GlcNAc...) asparagine; by host glycan. A run of 9 helical transmembrane segments spans residues 1031 to 1051 (FVVL…LIVT), 1070 to 1090 (VVLI…YFLL), 1104 to 1124 (ILLL…VALL), 1140 to 1164 (QRQP…MLLA), 1189 to 1209 (FSTD…TYIS), 1217 to 1237 (WLQY…LKGI), 1247 to 1267 (LPSH…AVVT), 1281 to 1301 (VPTL…ILIL), and 1360 to 1380 (TMLP…WQLI). A Peptidase C74 domain is found at 1441 to 1589 (KELIIKHKVR…DLEHLGWVLR (149 aa)). Active-site for cysteine protease NS2 activity residues include His1447, Glu1461, and Cys1512. A helical membrane pass occupies residues 1568–1588 (MLLVGNLGTEIGDLEHLGWVL). The 174-residue stretch at 1590–1763 (GPAVCKKVTE…LPIFEASSGR (174 aa)) folds into the Peptidase S31 domain. Active-site charge relay system; for serine protease NS3 activity residues include His1658 and Asp1695. The N-linked (GlcNAc...) asparagine; by host glycan is linked to Asn1713. Ser1752 functions as the Charge relay system; for serine protease NS3 activity in the catalytic mechanism. In terms of domain architecture, Helicase ATP-binding spans 1802 to 1960 (ITTMNRGEFR…QKHPIEEFIA (159 aa)). 1815 to 1822 (LATGAGKT) lines the ATP pocket. A DEAH box motif is present at residues 1910–1913 (DEYH). Positions 1978–2179 (GLKIPVEEMK…ELPMAVKNIM (202 aa)) constitute a Helicase C-terminal domain. N-linked (GlcNAc...) asparagine; by host glycosylation is found at Asn2134, Asn2217, Asn2494, Asn2787, Asn2815, Asn2891, Asn3211, and Asn3316. Residues Thr3500 and Leu3502 each contribute to the GTP site. Residues 3519–3642 (PVAVSFDTKA…ITERALGEKF (124 aa)) enclose the RdRp catalytic domain. Asn3689 carries an N-linked (GlcNAc...) asparagine; by host glycan. Arg3697 is a GTP binding site. N-linked (GlcNAc...) asparagine; by host glycosylation occurs at Asn3698. Lys3705 is a binding site for GTP. The N-linked (GlcNAc...) asparagine; by host glycan is linked to Asn3794.

The protein belongs to the pestivirus polyprotein family. In terms of assembly, interacts (via N-terminus) with host SP1; this interaction induces proteasomal degradation of SP1 with subsequent down-regulation of HDAC1 and ISG15 expression thereby counteracting the host innate immunity. Interacts (via C-terminus) with host IRF3. Interacts with host OS9. As to quaternary structure, homodimer; disulfide-linked. Interacts with host RPSA. In terms of assembly, homodimer; disulfide-linked. Heterodimer with E1; disulfide-linked. Homodimer; disulfide-linked. Heterodimer with E1; disulfide-linked. Interacts with host TRX2. Interacts with host receptor ADAM17 (via metalloproteinase domain); this interaction allows binding and probably entry of the virus into the host cell. Interacts with host ANXA2; this interaction allows binding and probably entry of the virus into the host cell. Interacts with host MERTK; this interaction allows binding and probably entry of the virus into the host cell. As to quaternary structure, interacts with host TRAF6; this interaction inhibits host NF-kappa-B pathway. Interacts with NS5B; this interaction enhances RNA-dependent RNA polymerase activity. Interacts with protein NS4A. In terms of assembly, interacts with host RAB5, this interaction facilitates the formation of NS4B-related complex. Interacts with host FTH1; this interaction plays a positive role in viral anti-apoptosis. Interacts with RNA-directed RNA polymerase. Interacts with host RSAD2; this interaction inhibits viral replication. As to quaternary structure, interacts with NS5A; this interaction promotes viral replication. In terms of processing, heavily glycosylated. Post-translationally, the viral RNA of pestiviruses is expressed as a single polyprotein which undergoes post-translational proteolytic processing resulting in the production of at least eleven individual proteins. The N-terminal protease cleaves itself from the nascent polyprotein autocatalytically and thereby generates the N-terminus of the adjacent viral capsid protein C. Cleavage between E2 and p7 is partial.

The protein localises to the host cytoplasm. It localises to the virion. The protein resides in the host cell membrane. It is found in the virion membrane. Its subcellular location is the host cell surface. The protein localises to the host membrane. It carries out the reaction Leu is conserved at position P1 for all four cleavage sites. Alanine is found at position P1' of the NS4A-NS4B cleavage site, whereas serine is found at position P1' of the NS3-NS4A, NS4B-NS5A and NS5A-NS5B cleavage sites.. The enzyme catalyses RNA(n) + a ribonucleoside 5'-triphosphate = RNA(n+1) + diphosphate. The catalysed reaction is a ribonucleoside 5'-triphosphate + H2O = a ribonucleoside 5'-diphosphate + phosphate + H(+). It catalyses the reaction ATP + H2O = ADP + phosphate + H(+). Functionally, leader cysteine autoprotease that cleaves itself from the nascent polyprotein during translation of the viral mRNA. Once released, plays a role in the inhibition of host innate immune response by interacting with host IRF3 and inducing its proteasomal degradation. In terms of biological role, packages viral RNA to form a viral nucleocapsid and thereby protects viral RNA. Also plays a role in transcription regulation. Protects the incoming virus against IFN-induced effectors. Its function is as follows. Plays a role in viral entry. Interacts with host RPSA that acts as a cellular attachment receptor for the virus. Also possesses intrinsic ribonuclease (RNase) activity that can inhibit the production of type I interferon and assist in the development of persistent infections. Cleaves preferentially NpU bonds. Binds to heparan sulfate on the host cells for entry. Plays a role in cell attachment and subsequent fusion of viral and cellular membranes. Therefore, mediates together with envelope glycoprotein E2 the viral entry. Functionally, plays a role in cell attachment and subsequent fusion of viral and cellular membranes. Therefore, mediates together with envelope glycoprotein E1 the viral entry. Binds to host ADAM17 receptor for entry. Binds to host ANXA2 for entry. Binds to host MERTK for entry. In terms of biological role, plays an essential role in the virus replication cycle by acting as a viroporin. Forms ion conductive pores, which alters the cell permeability allowing the transport of ions and other small molecules. Its function is as follows. Autoprotease that associates with the host chaperone JIV and cleaves the NS2-3 protein between NS2 and NS3. Also plays a role in the formation of infectious particles. Plays a role in the regulation of viral RNA replication. Functionally, multifunctional protein that contains an N-terminal protease and a C-terminal helicase, playing essential roles in viral polyprotein processing and viral genome replication. The chymotrypsin-like serine protease activity utilizes NS4A as an essential cofactor and catalyzes the cleavage of the polyprotein leading to the release of NS4A, NS4B, NS5A, and NS5B. Plays a role in the inhibition of host NF-kappa-B activation by interacting with and inhibiting host TRAF6. Interacts with NS5B to enhance RNA-dependent RNA polymerase activity. In terms of biological role, acts as a cofactor for the NS3 protease activity. Its function is as follows. Induces a specific membrane alteration that serves as a scaffold for the virus replication complex. Antagonizes host cell apoptosis by interacting with host ferritin heavy chain. The ORF4 protein physically binds host FTH1/FHC, resulting in the reduction of FTH1 protein levels in host cells. Reduction of FTH1 concentration further inhibits the accumulation of reactive oxygen in host cells, leading to reduced apoptosis. Regulates viral RNA replication by interacting with the 3'-untranslated region of viral RNA in a dose-dependent manner. At small concentrations promotes viral synthesis by interacting with the polymerase NS5B while at large concentrations, inhibits replication. Functionally, replicates the viral (+) and (-) genome. This is Genome polyprotein from Classical swine fever virus (strain Alfort/Tuebingen) (CSFV).